The sequence spans 217 residues: Leucyl/phenylalanyl-tRNA--protein transferase (217 aa).

The protein belongs to the L/F-transferase family.

The protein resides in the cytoplasm. It carries out the reaction N-terminal L-lysyl-[protein] + L-leucyl-tRNA(Leu) = N-terminal L-leucyl-L-lysyl-[protein] + tRNA(Leu) + H(+). It catalyses the reaction N-terminal L-arginyl-[protein] + L-leucyl-tRNA(Leu) = N-terminal L-leucyl-L-arginyl-[protein] + tRNA(Leu) + H(+). The catalysed reaction is L-phenylalanyl-tRNA(Phe) + an N-terminal L-alpha-aminoacyl-[protein] = an N-terminal L-phenylalanyl-L-alpha-aminoacyl-[protein] + tRNA(Phe). In terms of biological role, functions in the N-end rule pathway of protein degradation where it conjugates Leu, Phe and, less efficiently, Met from aminoacyl-tRNAs to the N-termini of proteins containing an N-terminal arginine or lysine. In Caulobacter vibrioides (strain ATCC 19089 / CIP 103742 / CB 15) (Caulobacter crescentus), this protein is Leucyl/phenylalanyl-tRNA--protein transferase.